Consider the following 230-residue polypeptide: uncharacterized protein (230 aa).

Positions 1 to 18 (MRQYTSKSILFMTAIALS) are cleaved as a signal peptide.

This is an uncharacterized protein from Pasteurella multocida (strain Pm70).